We begin with the raw amino-acid sequence, 585 residues long: Switch-associated protein 70 (585 aa).

The PH domain maps to 210–306; the sequence is DVLKQGYMIK…WIQAIHSTIH (97 aa). Positions 316–532 form a coiled coil; it reads HKEARQRRKE…KLEMAAKMTK (217 aa).

As to quaternary structure, the SWAP complex consists of NPM1, NCL, PARP1 and SWAP70. Post-translationally, tyrosine-phosphorylated.

The protein localises to the cytoplasm. Its subcellular location is the cell membrane. The protein resides in the nucleus. It is found in the cell projection. It localises to the lamellipodium. Functionally, phosphatidylinositol 3,4,5-trisphosphate-dependent guanine nucleotide exchange factor (GEF) which, independently of RAS, transduces signals from tyrosine kinase receptors to RAC. It also mediates signaling of membrane ruffling. Regulates the actin cytoskeleton as an effector or adapter protein in response to agonist stimulated phosphatidylinositol (3,4)-bisphosphate production and cell protrusion. This Bos taurus (Bovine) protein is Switch-associated protein 70 (SWAP70).